The primary structure comprises 325 residues: GTP 3',8-cyclase (325 aa).

Positions 1 to 226 (MNTVNYLRIS…EGACYGNGPA (226 aa)) constitute a Radical SAM core domain. R8 serves as a coordination point for GTP. [4Fe-4S] cluster contacts are provided by C15 and C19. Y21 contacts S-adenosyl-L-methionine. Residue C22 participates in [4Fe-4S] cluster binding. R60 serves as a coordination point for GTP. G64 provides a ligand contact to S-adenosyl-L-methionine. S91 is a binding site for GTP. An S-adenosyl-L-methionine-binding site is contributed by S115. A GTP-binding site is contributed by K152. M186 lines the S-adenosyl-L-methionine pocket. 2 residues coordinate [4Fe-4S] cluster: C249 and C252. 254-256 (RVR) provides a ligand contact to GTP. [4Fe-4S] cluster is bound at residue C266.

Belongs to the radical SAM superfamily. MoaA family. Monomer and homodimer. The cofactor is [4Fe-4S] cluster.

The enzyme catalyses GTP + AH2 + S-adenosyl-L-methionine = (8S)-3',8-cyclo-7,8-dihydroguanosine 5'-triphosphate + 5'-deoxyadenosine + L-methionine + A + H(+). The protein operates within cofactor biosynthesis; molybdopterin biosynthesis. Catalyzes the cyclization of GTP to (8S)-3',8-cyclo-7,8-dihydroguanosine 5'-triphosphate. The polypeptide is GTP 3',8-cyclase (Gloeobacter violaceus (strain ATCC 29082 / PCC 7421)).